We begin with the raw amino-acid sequence, 300 residues long: uncharacterized protein (300 aa).

The active-site Proton donor is the Tyr-53. 210–220 (SPLAGGKVFTE) lines the NADP(+) pocket.

Belongs to the aldo/keto reductase family. Aldo/keto reductase 2 subfamily.

This is an uncharacterized protein from Bacillus subtilis (strain 168).